Consider the following 1048-residue polypeptide: FHIP family protein GJ17503 (1048 aa).

Polar residues predominate over residues 1–15; the sequence is MSWLRTSPLRQSLTR. The interval 1–32 is disordered; that stretch reads MSWLRTSPLRQSLTRNSGSSGSGNSSATTTLR. A compositionally biased stretch (low complexity) spans 16–26; sequence NSGSSGSGNSS. Serine 500 carries the phosphoserine modification. Disordered stretches follow at residues 652-675, 813-871, and 924-984; these read TTTA…GRRD, APMH…KRRS, and ARGA…ESGL. The segment covering 816–838 has biased composition (low complexity); that stretch reads HQQHQQQQLQHTTNPTQQQQAQQ. Polar residues-rich tracts occupy residues 839-857 and 929-954; these read RSTY…SPTS and QEQS…TAVV. A compositionally biased stretch (low complexity) spans 955–978; that stretch reads SSSNSSIGGSTQTLSATHSSSTLH.

It belongs to the FHIP family.

The sequence is that of FHIP family protein GJ17503 from Drosophila virilis (Fruit fly).